The primary structure comprises 323 residues: GMP reductase (323 aa).

The active-site Thioimidate intermediate is Cys174. 203–226 (IIADGGIRHNGDIAKSVRFGASMV) serves as a coordination point for NADP(+).

Belongs to the IMPDH/GMPR family. GuaC type 2 subfamily.

The catalysed reaction is IMP + NH4(+) + NADP(+) = GMP + NADPH + 2 H(+). Functionally, catalyzes the irreversible NADPH-dependent deamination of GMP to IMP. It functions in the conversion of nucleobase, nucleoside and nucleotide derivatives of G to A nucleotides, and in maintaining the intracellular balance of A and G nucleotides. The chain is GMP reductase from Oenococcus oeni (strain ATCC BAA-331 / PSU-1).